The primary structure comprises 363 residues: GDP-fucose transporter (363 aa).

Transmembrane regions (helical) follow at residues 30–47, 62–79, 126–148, 152–171, 180–202, 222–244, 251–273, and 307–326; these read VITA…LVFL, FITW…LFLS, VSFY…YLIL, TSGQ…LLGV, LSYT…AIYT, LNAL…VFYF, TFWI…TGWQ, and LLWW…YTYV. Residues 334–363 form a disordered region; that stretch reads KNSGASPASEAKSDKVKLLGRDGNAAEESV. Positions 344-353 are enriched in basic and acidic residues; that stretch reads AKSDKVKLLG.

It belongs to the TPT transporter family. SLC35C subfamily.

Its subcellular location is the golgi apparatus membrane. Functionally, involved in GDP-fucose import from the cytoplasm into the Golgi lumen. The protein is GDP-fucose transporter of Caenorhabditis elegans.